We begin with the raw amino-acid sequence, 509 residues long: Solute carrier family 2, facilitated glucose transporter member 4 (509 aa).

Over 1–24 (MPSGFQQIGSEDGEPPQQRVTGTL) the chain is Cytoplasmic. Residues 7–13 (QIGSEDG) form an interaction with SRFBP1 region. Serine 10 carries the post-translational modification Phosphoserine. A helical transmembrane segment spans residues 25–45 (VLAVFSAVLGSLQFGYNIGVI). Residues 46–81 (NAPQKVIEQSYNETWLGRQGPEGPSSIPPGTLTTLW) lie on the Extracellular side of the membrane. Residue asparagine 57 is glycosylated (N-linked (GlcNAc...) asparagine). A helical transmembrane segment spans residues 82–102 (ALSVAIFSVGGMISSFLIGII). Residues 103–111 (SQWLGRKRA) lie on the Cytoplasmic side of the membrane. A helical membrane pass occupies residues 112-132 (MLVNNVLAVLGGSLMGLANAA). Topologically, residues 133 to 142 (ASYEMLILGR) are extracellular. Residues 143–163 (FLIGAYSGLTSGLVPMYVGEI) form a helical membrane-spanning segment. Topologically, residues 164 to 171 (APTHLRGA) are cytoplasmic. A helical transmembrane segment spans residues 172-192 (LGTLNQLAIVIGILIAQVLGL). Residue glutamine 177 participates in D-glucose binding. At 193–201 (ESLLGTASL) the chain is on the extracellular side. A helical membrane pass occupies residues 202 to 222 (WPLLLGLTVLPALLQLVLLPF). Residue cysteine 223 is the site of S-palmitoyl cysteine attachment. Topologically, residues 223 to 287 (CPESPRYLYI…LLGSRTHRQP (65 aa)) are cytoplasmic. Serine 274 is modified (phosphoserine; by SGK1). The helical transmembrane segment at 288-308 (LIIAVVLQLSQQLSGINAVFY) threads the bilayer. D-glucose-binding positions include 298 to 299 (QQ) and asparagine 304. The Extracellular portion of the chain corresponds to 309–323 (YSTSIFETAGVGQPA). Residues 324-344 (YATIGAGVVNTVFTLVSVLLV) form a helical membrane-spanning segment. Asparagine 333 serves as a coordination point for D-glucose. Residues 345-353 (ERAGRRTLH) are Cytoplasmic-facing. A helical membrane pass occupies residues 354-374 (LLGLAGMCGCAILMTVALLLL). At 375-384 (ERVPAMSYVS) the chain is on the extracellular side. The chain crosses the membrane as a helical span at residues 385–405 (IVAIFGFVAFFEIGPGPIPWF). D-glucose contacts are provided by glutamate 396 and tryptophan 404. At 406 to 417 (IVAELFSQGPRP) the chain is on the cytoplasmic side. The helical transmembrane segment at 418-438 (AAMAVAGFSNWTSNFIIGMGF) threads the bilayer. Residues 439–445 (QYVAEAM) lie on the Extracellular side of the membrane. Residues 446 to 466 (GPYVFLLFAVLLLGFFIFTFL) form a helical membrane-spanning segment. The Cytoplasmic segment spans residues 467–509 (RVPETRGRTFDQISAAFHRTPSLLEQEVKPSTELEYLGPDEND). Residue threonine 486 is modified to Phosphothreonine. The residue at position 488 (serine 488) is a Phosphoserine. Positions 489 to 490 (LL) match the Dileucine internalization motif motif.

The protein belongs to the major facilitator superfamily. Sugar transporter (TC 2.A.1.1) family. Glucose transporter subfamily. Interacts with NDUFA9. Binds to DAXX. Interacts via its N-terminus with SRFBP1. Interacts with TRARG1; the interaction is required for proper SLC2A4 recycling after insulin stimulation. Sumoylated. In terms of processing, palmitoylated. Palmitoylation by ZDHHC7 controls the insulin-dependent translocation of GLUT4 to the plasma membrane. Skeletal and cardiac muscles; brown and white fat.

The protein localises to the cell membrane. It localises to the endomembrane system. It is found in the cytoplasm. The protein resides in the perinuclear region. It carries out the reaction D-glucose(out) = D-glucose(in). In terms of biological role, insulin-regulated facilitative glucose transporter, which plays a key role in removal of glucose from circulation. Response to insulin is regulated by its intracellular localization: in the absence of insulin, it is efficiently retained intracellularly within storage compartments in muscle and fat cells. Upon insulin stimulation, translocates from these compartments to the cell surface where it transports glucose from the extracellular milieu into the cell. In Homo sapiens (Human), this protein is Solute carrier family 2, facilitated glucose transporter member 4.